We begin with the raw amino-acid sequence, 100 residues long: MRSFLYGILAFAVLARSSAVAAFPIPDESRPLSKTSPDTVAPRSLRVEAQEVIQSGRGDGYGGFWKNIIPSTNKIIKKPDIKIGKLIEAAKKAKKKMTKS.

Residues 1–22 (MRSFLYGILAFAVLARSSAVAA) form the signal peptide. A RxLR-dEER motif is present at residues 43-57 (RSLRVEAQEVIQSGR). The Calmodulin-binding motif signature appears at 78 to 82 (KPDIK).

Belongs to the RxLR effector family. Interacts with the host calmodulin.

Its subcellular location is the secreted. It is found in the host cell. In terms of biological role, secreted effector that associates with calmodulin to interfere with plant defense-associated calcium signaling in hosts. The sequence is that of RxLR effector protein PITG_18683 from Phytophthora infestans (strain T30-4) (Potato late blight agent).